The primary structure comprises 371 residues: Germination protease (371 aa).

Residues 1–16 (MEKQKLDLSAYQIRTD) constitute a propeptide that is removed on maturation.

Belongs to the peptidase A25 family. As to quaternary structure, homotetramer. In terms of processing, autoproteolytically processed. The inactive tetrameric zymogen termed p46 autoprocesses to a smaller form termed p41, which is active only during spore germination.

It carries out the reaction Endopeptidase action with P4 Glu or Asp, P1 preferably Glu &gt; Asp, P1' hydrophobic and P2' Ala.. Functionally, initiates the rapid degradation of small, acid-soluble proteins during spore germination. The sequence is that of Germination protease from Bacillus pumilus (strain SAFR-032).